The following is an 88-amino-acid chain: Cytochrome c oxidase subunit 6B2 (88 aa).

In terms of domain architecture, CHCH spans 29–75; the sequence is TRNCYQNFLDYHRCIKTMNRRGKSTQPCEYYFRVYHSLCPISWVQRW. The short motif at 32 to 42 is the Cx9C motif element; it reads CYQNFLDYHRC. 2 cysteine pairs are disulfide-bonded: cysteine 32-cysteine 67 and cysteine 42-cysteine 56. Positions 56–67 match the Cx10C motif motif; the sequence is CEYYFRVYHSLC.

The protein belongs to the cytochrome c oxidase subunit 6B family. Component of the cytochrome c oxidase (complex IV, CIV), a multisubunit enzyme composed of 14 subunits. The complex is composed of a catalytic core of 3 subunits MT-CO1, MT-CO2 and MT-CO3, encoded in the mitochondrial DNA, and 11 supernumerary subunits COX4I1 (or COX4I2), COX5A, COX5B, COX6A2 (or COX6A1), COX6B1 (or COX6B2), COX6C, COX7A1 (or COX7A2), COX7B, COX7C, COX8B and NDUFA4, which are encoded in the nuclear genome. The complex exists as a monomer or a dimer and forms supercomplexes (SCs) in the inner mitochondrial membrane with NADH-ubiquinone oxidoreductase (complex I, CI) and ubiquinol-cytochrome c oxidoreductase (cytochrome b-c1 complex, complex III, CIII), resulting in different assemblies (supercomplex SCI(1)III(2)IV(1) and megacomplex MCI(2)III(2)IV(2)). As to expression, testis specific.

Its subcellular location is the mitochondrion inner membrane. The protein operates within energy metabolism; oxidative phosphorylation. Component of the cytochrome c oxidase, the last enzyme in the mitochondrial electron transport chain which drives oxidative phosphorylation. The respiratory chain contains 3 multisubunit complexes succinate dehydrogenase (complex II, CII), ubiquinol-cytochrome c oxidoreductase (cytochrome b-c1 complex, complex III, CIII) and cytochrome c oxidase (complex IV, CIV), that cooperate to transfer electrons derived from NADH and succinate to molecular oxygen, creating an electrochemical gradient over the inner membrane that drives transmembrane transport and the ATP synthase. Cytochrome c oxidase is the component of the respiratory chain that catalyzes the reduction of oxygen to water. Electrons originating from reduced cytochrome c in the intermembrane space (IMS) are transferred via the dinuclear copper A center (CU(A)) of subunit 2 and heme A of subunit 1 to the active site in subunit 1, a binuclear center (BNC) formed by heme A3 and copper B (CU(B)). The BNC reduces molecular oxygen to 2 water molecules using 4 electrons from cytochrome c in the IMS and 4 protons from the mitochondrial matrix. This is Cytochrome c oxidase subunit 6B2 (COX6B2) from Bos taurus (Bovine).